The chain runs to 388 residues: Zinc finger C2H2 protein ECU10_0150 (388 aa).

A C2H2-type zinc finger spans residues 299–322 (YKCGFCGKAFESEKFIFNHFNNKH).

In Encephalitozoon cuniculi (strain GB-M1) (Microsporidian parasite), this protein is Zinc finger C2H2 protein ECU10_0150.